Reading from the N-terminus, the 212-residue chain is Translation initiation factor IF-3 (212 aa).

Residues M168–A212 form a disordered region. Residues P176 to G186 show a composition bias toward basic and acidic residues. A compositionally biased stretch (low complexity) spans A194 to A212.

Belongs to the IF-3 family. In terms of assembly, monomer.

The protein localises to the cytoplasm. IF-3 binds to the 30S ribosomal subunit and shifts the equilibrium between 70S ribosomes and their 50S and 30S subunits in favor of the free subunits, thus enhancing the availability of 30S subunits on which protein synthesis initiation begins. In Deinococcus radiodurans (strain ATCC 13939 / DSM 20539 / JCM 16871 / CCUG 27074 / LMG 4051 / NBRC 15346 / NCIMB 9279 / VKM B-1422 / R1), this protein is Translation initiation factor IF-3.